The sequence spans 116 residues: Large ribosomal subunit protein bL17 (116 aa).

The protein belongs to the bacterial ribosomal protein bL17 family. Part of the 50S ribosomal subunit. Contacts protein L32.

This is Large ribosomal subunit protein bL17 from Synechococcus sp. (strain CC9311).